A 950-amino-acid chain; its full sequence is Sodium/calcium exchanger Calx (950 aa).

A signal peptide spans 1 to 22 (MQLLLKSIFTCALFVIFVYATA). The Extracellular portion of the chain corresponds to 23–120 (QSLLKVQETE…PQRNISVGDR (98 aa)). 3 N-linked (GlcNAc...) asparagine glycosylation sites follow: Asn39, Asn47, and Asn114. Residues 121 to 141 (LVRGFVYFVLLIYLFVGVSII) form a helical membrane-spanning segment. Residues 142 to 179 (ADRFMAAIEAITSIERAVVVKGPNNTKQVMHVRIWNET) are Cytoplasmic-facing. Residues 180–200 (VANLTLMALGSSAPEILLSVI) traverse the membrane as a helical segment. Residues 201 to 216 (EIYAKDFESGDLGPGT) are Extracellular-facing. A helical transmembrane segment spans residues 217–237 (IVGSAAYNLFMIIAVCMIWIP). Topologically, residues 238-257 (AGEVRRIRHLRVFFVTALFS) are cytoplasmic. Helical transmembrane passes span 258–278 (VFAYVWLWLILSVFTPGVILV) and 279–299 (WEAIVTLLFFPLTVLWAYIAE). At 300 to 749 (RRLLVYKYMD…NDDEEEEVPS (450 aa)) the chain is on the cytoplasmic side. The interval 301–318 (RLLVYKYMDKNYRVNKRG) is corresponds to the exchanger inhibitory peptide (XIP) found in other sodium/calcium exchange proteins and thought to be involved in calmodulin binding. Positions 440-551 (DPIRMYFEPG…MIATVMILDD (112 aa)) constitute a Calx-beta 1 domain. Positions 455, 490, 515, 516, 518, 520, 523, 550, 551, and 552 each coordinate Ca(2+). The region spanning 555–694 (GIFAFTDSVF…LTTAYVRIRE (140 aa)) is the Calx-beta 2 domain. The helical transmembrane segment at 750–770 (CFSYVSHFVCLFWKVLFAFVP) threads the bilayer. Residues 771–775 (PTDIC) lie on the Extracellular side of the membrane. A helical transmembrane segment spans residues 776 to 796 (GGYVTFVVSIFVIGVITAIIG). Over 797–813 (DAASYFGCALNIKDSVT) the chain is Cytoplasmic. A helical membrane pass occupies residues 814-834 (AILFVALGTSIPDTFASMIAA). The Extracellular segment spans residues 835–848 (KHDEGADNCIGNVT). A glycan (N-linked (GlcNAc...) asparagine) is linked at Asn846. A helical transmembrane segment spans residues 849–869 (GSNAVNVFLGIGLAWTIAAVY). Topologically, residues 870–883 (HSSHGMTFNVEPGT) are cytoplasmic. A helical transmembrane segment spans residues 884–904 (IGFAVALFCGEALIAIMLIMF). The Extracellular portion of the chain corresponds to 905 to 923 (RRWHKGIGAELGGPKVSKY). A helical membrane pass occupies residues 924 to 944 (ISAAILVFLWVFYVVICILEA). The Cytoplasmic segment spans residues 945-950 (YDVIRV).

It belongs to the Ca(2+):cation antiporter (CaCA) (TC 2.A.19) family. SLC8 subfamily. As to expression, ubiquitously expressed with higher expression in head compared to body (at protein level). Enriched in photoreceptor cells of the eye (at protein level). In the adult head, expressed in retina, optic ganglia and all neuronal tissues.

It is found in the cell membrane. The protein localises to the cell projection. It localises to the rhabdomere membrane. The catalysed reaction is Ca(2+)(in) + 3 Na(+)(out) = Ca(2+)(out) + 3 Na(+)(in). With respect to regulation, activated by a Na(+) electrochemical gradient but also undergoes Na(2+)-dependent inactivation. Inhibited by micromolar levels of cytoplasmic Ca(2+), which is the opposite of most characterized mammalian homologs. Its activity is regulated as follows. Exhibits greater extent of inhibition by Ca(2+) than isoform D/1.2. Exhibits greater Na(2+)-dependent inactivation than isoform A/1.1, probably due to greater stability of the inactive Na(2+)-bound form. Na(+)/Ca(2+) antiporter that couples the energy of a Na(+) electrochemical gradient to the movement of Ca(2+) against an electrochemical gradient across a membrane, which contributes to the regulation of cytoplasmic Ca(2+) levels. Mediates Na(+)/Ca(2+) exchange in photoreceptor cells and involved in controlling Ca(2+) levels during phototransduction, affecting magnitude of the photoresponse, activation kinetics, signal amplification, response termination, and light adaptation. Light induced depolarization of photoreceptor cells, resulting in Na(+) and Ca(2+) entry through trp/transient receptor potential protein channels, is essential for photoreceptor cell function but may result in toxic levels of cytoplasmic Ca(2+). Na(+)/Ca(2+) antiporter regulation of Ca(2+) levels protects photoreceptor cells from light-dependent retinal degeneration. This Drosophila melanogaster (Fruit fly) protein is Sodium/calcium exchanger Calx.